The chain runs to 353 residues: Phosphate acyltransferase (353 aa).

Belongs to the PlsX family. Homodimer. Probably interacts with PlsY.

It is found in the cytoplasm. The enzyme catalyses a fatty acyl-[ACP] + phosphate = an acyl phosphate + holo-[ACP]. Its pathway is lipid metabolism; phospholipid metabolism. Its function is as follows. Catalyzes the reversible formation of acyl-phosphate (acyl-PO(4)) from acyl-[acyl-carrier-protein] (acyl-ACP). This enzyme utilizes acyl-ACP as fatty acyl donor, but not acyl-CoA. This chain is Phosphate acyltransferase, found in Agrobacterium fabrum (strain C58 / ATCC 33970) (Agrobacterium tumefaciens (strain C58)).